The primary structure comprises 65 residues: Large ribosomal subunit protein bL35 (65 aa).

The protein belongs to the bacterial ribosomal protein bL35 family.

The chain is Large ribosomal subunit protein bL35 from Oleidesulfovibrio alaskensis (strain ATCC BAA-1058 / DSM 17464 / G20) (Desulfovibrio alaskensis).